The primary structure comprises 178 residues: ATP-dependent protease subunit HslV (178 aa).

Thr-2 is an active-site residue. 3 residues coordinate Na(+): Gly-157, Cys-160, and Thr-163.

Belongs to the peptidase T1B family. HslV subfamily. As to quaternary structure, a double ring-shaped homohexamer of HslV is capped on each side by a ring-shaped HslU homohexamer. The assembly of the HslU/HslV complex is dependent on binding of ATP.

The protein resides in the cytoplasm. The catalysed reaction is ATP-dependent cleavage of peptide bonds with broad specificity.. With respect to regulation, allosterically activated by HslU binding. Its function is as follows. Protease subunit of a proteasome-like degradation complex believed to be a general protein degrading machinery. The protein is ATP-dependent protease subunit HslV of Hamiltonella defensa subsp. Acyrthosiphon pisum (strain 5AT).